The chain runs to 645 residues: Cysteine-rich receptor-like protein kinase 19 (645 aa).

Residues 1-20 form the signal peptide; the sequence is MSSLISFIFLFLFSSITASA. The Extracellular portion of the chain corresponds to 21–262; it reads QNTFYLYHNC…PRPGKGGNSS (242 aa). 2 consecutive Gnk2-homologous domains span residues 24 to 129 and 135 to 239; these read FYLY…NRNI and TDGG…NYAF. Asn29, Asn39, Asn57, Asn101, Asn185, Asn241, and Asn260 each carry an N-linked (GlcNAc...) asparagine glycan. The helical transmembrane segment at 263 to 283 threads the bilayer; it reads VIIIAVVVPITVLFLLLVAVF. Residues 284–645 lie on the Cytoplasmic side of the membrane; the sequence is SVRAKNKRTL…EASITRVTPR (362 aa). Residues 326-603 enclose the Protein kinase domain; that stretch reads FLPINKLGQG…IVQMLTTSLI (278 aa). ATP contacts are provided by residues 332–340 and Lys354; that span reads LGQGGFGEV. Tyr399 carries the phosphotyrosine modification. The active-site Proton acceptor is the Asp451. Position 491 is a phosphothreonine (Thr491). Tyr499 carries the phosphotyrosine modification. A disordered region spans residues 616 to 645; sequence RSKQEQAGPSIDSSTHCSVDEASITRVTPR. Positions 620-632 are enriched in polar residues; sequence EQAGPSIDSSTHC.

The protein belongs to the protein kinase superfamily. Ser/Thr protein kinase family. CRK subfamily. As to quaternary structure, interacts with MWL1.

It localises to the membrane. The catalysed reaction is L-seryl-[protein] + ATP = O-phospho-L-seryl-[protein] + ADP + H(+). It catalyses the reaction L-threonyl-[protein] + ATP = O-phospho-L-threonyl-[protein] + ADP + H(+). This chain is Cysteine-rich receptor-like protein kinase 19 (CRK19), found in Arabidopsis thaliana (Mouse-ear cress).